Here is a 198-residue protein sequence, read N- to C-terminus: Recombination protein RecR (198 aa).

Residues 57 to 72 (CSVCGHITENDPCYIC) form a C4-type zinc finger. Residues 80–175 (SVICVVEDDK…KVTRLAQGLS (96 aa)) enclose the Toprim domain.

It belongs to the RecR family.

Functionally, may play a role in DNA repair. It seems to be involved in an RecBC-independent recombinational process of DNA repair. It may act with RecF and RecO. The protein is Recombination protein RecR of Staphylococcus haemolyticus (strain JCSC1435).